A 160-amino-acid polypeptide reads, in one-letter code: Deoxyuridine 5'-triphosphate nucleotidohydrolase (160 aa).

Residues 79–81, asparagine 92, 96–98, and lysine 106 each bind substrate; these read RSG and TVD.

It belongs to the dUTPase family. Requires Mg(2+) as cofactor.

It catalyses the reaction dUTP + H2O = dUMP + diphosphate + H(+). It participates in pyrimidine metabolism; dUMP biosynthesis; dUMP from dCTP (dUTP route): step 2/2. Functionally, this enzyme is involved in nucleotide metabolism: it produces dUMP, the immediate precursor of thymidine nucleotides and it decreases the intracellular concentration of dUTP so that uracil cannot be incorporated into DNA. This chain is Deoxyuridine 5'-triphosphate nucleotidohydrolase, found in Rhizobium meliloti (strain 1021) (Ensifer meliloti).